Reading from the N-terminus, the 269-residue chain is 3-methyl-2-oxobutanoate hydroxymethyltransferase (269 aa).

Residues aspartate 50 and aspartate 89 each coordinate Mg(2+). 3-methyl-2-oxobutanoate contacts are provided by residues 50 to 51, aspartate 89, and lysine 119; that span reads DS. Glutamate 121 contacts Mg(2+). The active-site Proton acceptor is glutamate 187.

It belongs to the PanB family. As to quaternary structure, homodecamer; pentamer of dimers. The cofactor is Mg(2+).

It is found in the cytoplasm. It carries out the reaction 3-methyl-2-oxobutanoate + (6R)-5,10-methylene-5,6,7,8-tetrahydrofolate + H2O = 2-dehydropantoate + (6S)-5,6,7,8-tetrahydrofolate. The protein operates within cofactor biosynthesis; (R)-pantothenate biosynthesis; (R)-pantoate from 3-methyl-2-oxobutanoate: step 1/2. In terms of biological role, catalyzes the reversible reaction in which hydroxymethyl group from 5,10-methylenetetrahydrofolate is transferred onto alpha-ketoisovalerate to form ketopantoate. The polypeptide is 3-methyl-2-oxobutanoate hydroxymethyltransferase (Corynebacterium efficiens (strain DSM 44549 / YS-314 / AJ 12310 / JCM 11189 / NBRC 100395)).